The following is a 617-amino-acid chain: E3 ubiquitin-protein ligase synoviolin (617 aa).

The Cytoplasmic segment spans residues 1-4; the sequence is MFRT. Positions 1–84 are necessary and sufficient for SEL1L interaction; sequence MFRTAVMMAA…EHLLERSWYA (84 aa). The involved in FAM8A1 interaction stretch occupies residues 1–251; it reads MFRTAVMMAA…LFAIRPMYLA (251 aa). Residues 5-25 traverse the membrane as a helical segment; it reads AVMMAASLALTGAVVAHAYYL. Residues 26-41 lie on the Lumenal side of the membrane; it reads KHQFYPTVVYLTKSSP. Residues 42–62 traverse the membrane as a helical segment; sequence SMAVLYIQAFVLVFLLGKVMG. Over 63–98 the chain is Cytoplasmic; that stretch reads KVFFGQLRAAEMEHLLERSWYAVTETCLAFTVFRDD. Residues 99–119 traverse the membrane as a helical segment; the sequence is FSPRFVALFTLLLFLKCFHWL. Residues 120 to 140 are Lumenal-facing; the sequence is AEDRVDFMERSPNISWLFHCR. The helical transmembrane segment at 141–161 threads the bilayer; it reads IVSLMFLLGILDFLFVSHAYH. Topologically, residues 162–169 are cytoplasmic; sequence SILTRGAS. Residues 170–190 traverse the membrane as a helical segment; sequence VQLVFGFEYAILMTMVLTIFI. The Lumenal portion of the chain corresponds to 191–224; it reads KYVLHSVDLQSENPWDNKAVYMLYTELFTGFIKV. Residues 225–245 form a helical membrane-spanning segment; sequence LLYMAFMTIMIKVHTFPLFAI. Residues 236 to 270 are interaction with p53/TP53; that stretch reads KVHTFPLFAIRPMYLAMRQFKKAVTDAIMSRRAIR. Over 246–617 the chain is Cytoplasmic; the sequence is RPMYLAMRQF…LQKLESPVAH (372 aa). Zn(2+)-binding residues include Cys291, Cys294, Cys307, His309, His312, Cys315, Cys326, and Cys329. The RING-type; atypical zinc-finger motif lies at 291 to 330; it reads CIICREEMVTGAKRLPCNHIFHTSCLRSWFQRQQTCPTCR. 3 disordered regions span residues 337–375, 393–453, and 535–617; these read SLPAQSPPPPEPADQGPPPAPHPPPLLPQPPNFPQGLLP, PVPP…PAPG, and RPAT…PVAH. Residues 341-375 show a composition bias toward pro residues; sequence QSPPPPEPADQGPPPAPHPPPLLPQPPNFPQGLLP. The segment covering 417-451 has biased composition (low complexity); it reads PSGAATTTAAGTSATAASATASGPGSGSAPEAGPA. The tract at residues 480–535 is HAF-H domain; necessary to form higher-order Hrd1 complexes; the sequence is GFAGLTPEELRALEGHERQHLEARLQSLRNIHTLLDAAMLQINQYLTVLASLGPPR. Low complexity predominate over residues 537-569; that stretch reads ATSVNSTEETATTVVAAASSTSIPSSEATTPTP. Over residues 591 to 600 the composition is skewed to acidic residues; it reads EMPEDGEPDA. Ser613 carries the post-translational modification Phosphoserine.

It belongs to the HRD1 family. Homodimer. Interacts with p53/TP53. Interacts with HTT. Component of the HRD1 complex, which comprises at least SYNV1/HRD1, DERL1/2, FAM8A1, HERPUD1/HERP, OS9, SEL1L and UBE2J1. FAM8A1 is stabilized by interaction with SYNV1, which prevents its proteasomal degradation. OS9 and UBE2J1 recruitment to the complex may be mediated by SEL1L. SYNV1 assembles with SEL1L and FAM8A1 through its transmembrane domains, but interaction with its cytoplasmic domain is required to confer stability to FAM8A1 and enhance recruitment of HERPUD1. The HRD1 complex also associates with VIMP and may transfer misfolded proteins from the endoplasmic reticulum to VCP. May form a complex with ERLEC1, HSPA5, OS9 and SEL1L. Interacts with VCP. Interacts with UBXN6. Interacts with BAG6. Interacts with NFE2L1. Interacts (via N-terminus) with components of the pre-B cell receptor, including IGLL1 and VPREB1. Interacts with CREB3L3; this interaction leads to CREB3L3 ubiquitination and proteasomal degradation. In terms of processing, not N-glycosylated. Auto-ubiquitinated. Deubiquitinated by USP19. Ubiquitously expressed, with highest levels in liver and kidney (at protein level). Up-regulated in synovial tissues from patients with rheumatoid arthritis (at protein level).

The protein localises to the endoplasmic reticulum membrane. The enzyme catalyses S-ubiquitinyl-[E2 ubiquitin-conjugating enzyme]-L-cysteine + [acceptor protein]-L-lysine = [E2 ubiquitin-conjugating enzyme]-L-cysteine + N(6)-ubiquitinyl-[acceptor protein]-L-lysine.. Its pathway is protein modification; protein ubiquitination. Functionally, E3 ubiquitin-protein ligase which accepts ubiquitin specifically from endoplasmic reticulum-associated UBC7 E2 ligase and transfers it to substrates, promoting their degradation. Component of the endoplasmic reticulum quality control (ERQC) system also called ER-associated degradation (ERAD) involved in ubiquitin-dependent degradation of misfolded endoplasmic reticulum proteins. Also promotes the degradation of normal but naturally short-lived proteins such as SGK. Protects cells from ER stress-induced apoptosis. Protects neurons from apoptosis induced by polyglutamine-expanded huntingtin (HTT) or unfolded GPR37 by promoting their degradation. Sequesters p53/TP53 in the cytoplasm and promotes its degradation, thereby negatively regulating its biological function in transcription, cell cycle regulation and apoptosis. Mediates the ubiquitination and subsequent degradation of cytoplasmic NFE2L1. During the early stage of B cell development, required for degradation of the pre-B cell receptor (pre-BCR) complex, hence supporting further differentiation into mature B cells. This chain is E3 ubiquitin-protein ligase synoviolin, found in Homo sapiens (Human).